Reading from the N-terminus, the 141-residue chain is Hemoglobin subunit alpha (141 aa).

The Globin domain maps to 1-141; sequence VLSPADKTNV…VSTVLTSKYR (141 aa). Serine 3 bears the Phosphoserine mark. Lysine 7 carries the post-translational modification N6-succinyllysine. At threonine 8 the chain carries Phosphothreonine. Position 11 is an N6-succinyllysine (lysine 11). The residue at position 16 (lysine 16) is an N6-acetyllysine; alternate. Lysine 16 carries the post-translational modification N6-succinyllysine; alternate. Tyrosine 24 bears the Phosphotyrosine mark. A Phosphoserine modification is found at serine 35. Residue lysine 40 is modified to N6-succinyllysine. Histidine 58 is a binding site for O2. Histidine 87 serves as a coordination point for heme b. Position 102 is a phosphoserine (serine 102). Threonine 108 bears the Phosphothreonine mark. Serine 124 and serine 131 each carry phosphoserine. 2 positions are modified to phosphothreonine: threonine 134 and threonine 137. At serine 138 the chain carries Phosphoserine.

It belongs to the globin family. As to quaternary structure, heterotetramer of two alpha chains and two beta chains. Red blood cells.

In terms of biological role, involved in oxygen transport from the lung to the various peripheral tissues. Hemopressin acts as an antagonist peptide of the cannabinoid receptor CNR1. Hemopressin-binding efficiently blocks cannabinoid receptor CNR1 and subsequent signaling. The chain is Hemoglobin subunit alpha (HBA) from Cynopterus sphinx (Indian short-nosed fruit bat).